A 347-amino-acid polypeptide reads, in one-letter code: Dihydroorotase (347 aa).

Positions 14 and 16 each coordinate Zn(2+). Residues 16-18 and N42 each bind substrate; that span reads HLR. Residues K100, H137, and H175 each coordinate Zn(2+). K100 is modified (N6-carboxylysine). H137 lines the substrate pocket. L220 is a binding site for substrate. Zn(2+) is bound at residue D248. Residue D248 is part of the active site. Substrate contacts are provided by H252 and A264.

It belongs to the metallo-dependent hydrolases superfamily. DHOase family. Class II DHOase subfamily. In terms of assembly, homodimer. It depends on Zn(2+) as a cofactor.

It carries out the reaction (S)-dihydroorotate + H2O = N-carbamoyl-L-aspartate + H(+). Its pathway is pyrimidine metabolism; UMP biosynthesis via de novo pathway; (S)-dihydroorotate from bicarbonate: step 3/3. Its function is as follows. Catalyzes the reversible cyclization of carbamoyl aspartate to dihydroorotate. The polypeptide is Dihydroorotase (Pseudomonas savastanoi pv. phaseolicola (strain 1448A / Race 6) (Pseudomonas syringae pv. phaseolicola (strain 1448A / Race 6))).